The primary structure comprises 174 residues: Granulocyte colony-stimulating factor (174 aa).

Cystine bridges form between Cys-36–Cys-42 and Cys-64–Cys-74. An O-linked (GalNAc...) threonine glycan is attached at Thr-133.

Belongs to the IL-6 superfamily. In terms of assembly, monomer. Post-translationally, O-glycosylated.

The protein localises to the secreted. Its function is as follows. Granulocyte/macrophage colony-stimulating factors are cytokines that act in hematopoiesis by controlling the production, differentiation, and function of 2 related white cell populations of the blood, the granulocytes and the monocytes-macrophages. This CSF induces granulocytes. In Ovis aries (Sheep), this protein is Granulocyte colony-stimulating factor (CSF3).